Consider the following 435-residue polypeptide: ATP-dependent protease ATPase subunit HslU (435 aa).

ATP contacts are provided by residues I18, 60 to 65 (GVGKTE), D248, E313, and R385.

Belongs to the ClpX chaperone family. HslU subfamily. A double ring-shaped homohexamer of HslV is capped on each side by a ring-shaped HslU homohexamer. The assembly of the HslU/HslV complex is dependent on binding of ATP.

The protein localises to the cytoplasm. In terms of biological role, ATPase subunit of a proteasome-like degradation complex; this subunit has chaperone activity. The binding of ATP and its subsequent hydrolysis by HslU are essential for unfolding of protein substrates subsequently hydrolyzed by HslV. HslU recognizes the N-terminal part of its protein substrates and unfolds these before they are guided to HslV for hydrolysis. The polypeptide is ATP-dependent protease ATPase subunit HslU (Rhizobium etli (strain CIAT 652)).